The following is a 223-amino-acid chain: ATP phosphoribosyltransferase (223 aa).

The protein belongs to the ATP phosphoribosyltransferase family. Short subfamily. As to quaternary structure, heteromultimer composed of HisG and HisZ subunits.

The protein resides in the cytoplasm. The catalysed reaction is 1-(5-phospho-beta-D-ribosyl)-ATP + diphosphate = 5-phospho-alpha-D-ribose 1-diphosphate + ATP. It functions in the pathway amino-acid biosynthesis; L-histidine biosynthesis; L-histidine from 5-phospho-alpha-D-ribose 1-diphosphate: step 1/9. Functionally, catalyzes the condensation of ATP and 5-phosphoribose 1-diphosphate to form N'-(5'-phosphoribosyl)-ATP (PR-ATP). Has a crucial role in the pathway because the rate of histidine biosynthesis seems to be controlled primarily by regulation of HisG enzymatic activity. This is ATP phosphoribosyltransferase from Bordetella pertussis (strain Tohama I / ATCC BAA-589 / NCTC 13251).